Reading from the N-terminus, the 526-residue chain is Trigger factor (526 aa).

The region spanning 162 to 243 (GDFVSIDLSA…LGSVKERELP (82 aa)) is the PPIase FKBP-type domain. Residues 425–460 (DTDGADVDPKEYFGDVEAEGDKADKAETDKAEEKPK) show a composition bias toward basic and acidic residues. The segment at 425–526 (DTDGADVDPK…AKKAAEKKED (102 aa)) is disordered. Residues 461 to 517 (KAPAKKSTTKKSTAKKSTAKKSTAKKSTAKKSTAKKSTTKKATKSTAKKSTAKKTTA) are compositionally biased toward basic residues.

This sequence belongs to the FKBP-type PPIase family. Tig subfamily.

It localises to the cytoplasm. It carries out the reaction [protein]-peptidylproline (omega=180) = [protein]-peptidylproline (omega=0). Involved in protein export. Acts as a chaperone by maintaining the newly synthesized protein in an open conformation. Functions as a peptidyl-prolyl cis-trans isomerase. This chain is Trigger factor, found in Corynebacterium jeikeium (strain K411).